The sequence spans 175 residues: uncharacterized protein (175 aa).

The N-terminal 11 residues, 1-11 (METWRKGSFRN), are a transit peptide targeting the mitochondrion. A disordered region spans residues 29–48 (QGSILSQASTAGGDHEEYSN).

It is found in the mitochondrion. This is an uncharacterized protein from Mus musculus (Mouse).